Consider the following 90-residue polypeptide: U7-theraphotoxin-Hhn1a 3 (90 aa).

The signal sequence occupies residues 1 to 26; that stretch reads MKTAIFTVVLALAVFAVLSFGWEANG. Positions 27–50 are excised as a propeptide; sequence KALSEEFTELIHEKEAASETEARE. Cystine bridges form between Cys-51/Cys-65, Cys-58/Cys-70, and Cys-64/Cys-81.

The protein belongs to the neurotoxin 10 (Hwtx-1) family. 13 (Hntx-13) subfamily. Expressed by the venom gland.

Its subcellular location is the secreted. Its function is as follows. Ion channel inhibitor. This is U7-theraphotoxin-Hhn1a 3 from Cyriopagopus hainanus (Chinese bird spider).